The chain runs to 67 residues: Phycobilisome 7.8 kDa linker polypeptide, allophycocyanin-associated, core (67 aa).

Positions 1 to 56 (MRMFRITACLPSPSKIRTQRELQNTFFTKLVPYDAWFREQQRIQKLGGKIIKVELA) constitute a CpcD-like domain.

The protein belongs to the phycobilisome linker protein family.

The protein localises to the cellular thylakoid membrane. Functionally, rod linker protein, associated with allophycocyanin. Linker polypeptides determine the state of aggregation and the location of the disk-shaped phycobiliprotein units within the phycobilisome and modulate their spectroscopic properties in order to mediate a directed and optimal energy transfer. This Synechococcus sp. (strain ATCC 27144 / PCC 6301 / SAUG 1402/1) (Anacystis nidulans) protein is Phycobilisome 7.8 kDa linker polypeptide, allophycocyanin-associated, core (apcC).